The primary structure comprises 135 residues: ATP synthase epsilon chain (135 aa).

This sequence belongs to the ATPase epsilon chain family. As to quaternary structure, F-type ATPases have 2 components, CF(1) - the catalytic core - and CF(0) - the membrane proton channel. CF(1) has five subunits: alpha(3), beta(3), gamma(1), delta(1), epsilon(1). CF(0) has three main subunits: a, b and c.

The protein localises to the cell inner membrane. Its function is as follows. Produces ATP from ADP in the presence of a proton gradient across the membrane. This chain is ATP synthase epsilon chain, found in Rhizobium rhizogenes (strain K84 / ATCC BAA-868) (Agrobacterium radiobacter).